Reading from the N-terminus, the 248-residue chain is Ubiquinone biosynthesis O-methyltransferase (248 aa).

The S-adenosyl-L-methionine site is built by Arg40, Gly71, Asp92, and Met135.

The protein belongs to the methyltransferase superfamily. UbiG/COQ3 family.

It carries out the reaction a 3-demethylubiquinol + S-adenosyl-L-methionine = a ubiquinol + S-adenosyl-L-homocysteine + H(+). It catalyses the reaction a 3-(all-trans-polyprenyl)benzene-1,2-diol + S-adenosyl-L-methionine = a 2-methoxy-6-(all-trans-polyprenyl)phenol + S-adenosyl-L-homocysteine + H(+). Its pathway is cofactor biosynthesis; ubiquinone biosynthesis. Its function is as follows. O-methyltransferase that catalyzes the 2 O-methylation steps in the ubiquinone biosynthetic pathway. This Dinoroseobacter shibae (strain DSM 16493 / NCIMB 14021 / DFL 12) protein is Ubiquinone biosynthesis O-methyltransferase.